The primary structure comprises 570 residues: Proline--tRNA ligase (570 aa).

This sequence belongs to the class-II aminoacyl-tRNA synthetase family. ProS type 1 subfamily. Homodimer.

The protein localises to the cytoplasm. The catalysed reaction is tRNA(Pro) + L-proline + ATP = L-prolyl-tRNA(Pro) + AMP + diphosphate. Functionally, catalyzes the attachment of proline to tRNA(Pro) in a two-step reaction: proline is first activated by ATP to form Pro-AMP and then transferred to the acceptor end of tRNA(Pro). As ProRS can inadvertently accommodate and process non-cognate amino acids such as alanine and cysteine, to avoid such errors it has two additional distinct editing activities against alanine. One activity is designated as 'pretransfer' editing and involves the tRNA(Pro)-independent hydrolysis of activated Ala-AMP. The other activity is designated 'posttransfer' editing and involves deacylation of mischarged Ala-tRNA(Pro). The misacylated Cys-tRNA(Pro) is not edited by ProRS. The chain is Proline--tRNA ligase from Pelotomaculum thermopropionicum (strain DSM 13744 / JCM 10971 / SI).